A 142-amino-acid polypeptide reads, in one-letter code: Large ribosomal subunit protein uL13 (142 aa).

The protein belongs to the universal ribosomal protein uL13 family. Part of the 50S ribosomal subunit.

In terms of biological role, this protein is one of the early assembly proteins of the 50S ribosomal subunit, although it is not seen to bind rRNA by itself. It is important during the early stages of 50S assembly. The polypeptide is Large ribosomal subunit protein uL13 (Idiomarina loihiensis (strain ATCC BAA-735 / DSM 15497 / L2-TR)).